Here is a 426-residue protein sequence, read N- to C-terminus: Potassium channel subfamily K member 2 (426 aa).

Over 1–61 the chain is Cytoplasmic; that stretch reads MLPSASRERP…TTINVMKWKT (61 aa). 2 important for GNG4 binding and L-glutamate release in astrocytes regions span residues 17–38 and 51–61; these read AAPD…LSFS and DTTINVMKWKT. The chain crosses the membrane as a helical span at residues 62-82; it reads VSTIFLVVVLYLIIGATVFKA. N-linked (GlcNAc...) asparagine glycosylation is found at N110 and N134. Positions 144 to 170 form an intramembrane region, pore-forming; sequence LGSSFFFAGTVITTIGFGNISPRTEGG. T157, I158, G159, and F160 together coordinate K(+). Positions 157–162 are selectivity filter 1; sequence TIGFGN. Residues 172-192 form a helical membrane-spanning segment; sequence IFCIIYALLGIPLFGFLLAGV. Over 193–223 the chain is Cytoplasmic; sequence GDQLGTIFGKGIAKVEDTFIKWNVSQTKIRI. Residues 224-244 form a helical membrane-spanning segment; sequence ISTIIFILFGCVLFVALPAII. Positions 253 to 283 form an intramembrane region, pore-forming; that stretch reads ALDAIYFVVITLTTIGFGDYVAGGSDIEYLD. K(+) contacts are provided by T266, I267, G268, and F269. A selectivity filter 2 region spans residues 266–271; that stretch reads TIGFGD. A helical membrane pass occupies residues 288 to 308; it reads VVWFWILVGLAYFAAVLSMIG. Topologically, residues 309-426 are cytoplasmic; it reads DWLRVISKKT…EEIAVIENIK (118 aa). The segment at 313–326 is interaction with AKAP5; sequence VISKKTKEEVGEFR. The segment at 337 to 385 is essential for chloroform and halothane sensitivity; that stretch reads TAEFKETRRRLSVEIYDKFQRATSIKRKLSAELAGNHNQELTPCRRTLS. A Phosphoserine; by PKA modification is found at S348.

Belongs to the two pore domain potassium channel (TC 1.A.1.8) family. Homodimer; disulfide-linked. Forms heterodimers with other 2-pore domain K(+) channel subunits, such as KCNK1, KCNK4, KCNK10 and KCNK18. Interacts with AKAP5; the channel is recruited to postsynaptic microdomains by AKAP5 where it can integrate neurotransmitter receptor signals. Part of a complex composed of AKAP5 and ADRB2. Upon AKAP5 binding, the channel is no longer sensitive to intracellular acidification, membrane stretch or arachidonic acid stimuli. Interacts with POPDC1; the interaction enhances KCNK2 surface expression and is inhibited by cAMP. Interacts (via N-terminus) with G-protein subunit GNG4 (via C-terminus); this interaction confers ion selectivity to L-glutamate and Cl(-) anions. Post-translationally, phosphorylation at Ser-348 controls the reversible conversion from a leak channel to a voltage-dependent channel. In terms of tissue distribution, detected in kidney, adrenal gland and brain where it is preferentially expressed in the amygdala but not found in thalamus, hypothalamus, hippocampus or substantia nigra.

It is found in the cell membrane. The protein resides in the endoplasmic reticulum membrane. The protein localises to the cell projection. It localises to the axon. Its subcellular location is the dendrite. It is found in the postsynaptic density membrane. The protein resides in the sarcolemma. It catalyses the reaction K(+)(in) = K(+)(out). It carries out the reaction L-glutamate(out) = L-glutamate(in). The catalysed reaction is chloride(in) = chloride(out). The enzyme catalyses Rb(+)(in) = Rb(+)(out). It catalyses the reaction Cs(+)(in) = Cs(+)(out). Its activity is regulated as follows. Activated by various stimuli including intracellular acidic pH, mechanical stretch and polyunsaturated fatty acids such as arachidonic acid. Activated by volatile anesthetics such as chloroform, halothane, and isoflurane. Its function is as follows. K(+) channel that conducts voltage-dependent outward rectifying currents upon membrane depolarization. Voltage sensing is coupled to K(+) electrochemical gradient in an 'ion flux gating' mode where outward but not inward ion flow opens the gate. Converts to voltage-independent 'leak' conductance mode upon stimulation by various stimuli including mechanical membrane stretch, acidic pH, heat and lipids. Reversibly converts between a voltage-insensitive K(+) 'leak' channel and a voltage-dependent outward rectifying K(+) channel in a phosphorylation-dependent manner. Homo- and heterodimerizes to form functional channels with distinct regulatory and gating properties. In trigeminal ganglia sensory neurons, the heterodimer of KCNK2/TREK-1 and KCNK18/TRESK inhibits neuronal firing and neurogenic inflammation by stabilizing the resting membrane potential at K(+) equilibrium potential as well as by regulating the threshold of action potentials and the spike frequency. At trigeminal A-beta afferent nerves, the heterodimer of KCNK2/TREK-1 and KCNK4/TRAAK is mostly coexpressed at nodes of Ranvier where it conducts voltage-independent mechanosensitive and thermosensitive currents, allowing rapid action potential repolarization, high speed and high frequence saltatory conduction on myelinated nerves to ensure prompt sensory responses. In hippocampal astrocytes, the heterodimer of KCNK2/TREK-1 and KCNK1/TWIK-1 allows passive K(+) conductance under basal conditions, but changes ion selectivity and becomes permeable to L-glutamate and Cl(-) ions upon binding to G-protein subunit GNG4 in stimulated astrocytes. Mediates rapid L-glutamate release in response to activation of G-protein-coupled receptors, such as F2R and CNR1. In hippocampal pyramidal neurons, the homodimer of KCNK2/TREK-1 contributes to gamma-aminobutyric acid (GABA) B-induced slow inhibitory postsynaptic potential. Associates with AKAP5 and Gs-protein-coupled receptor B2AR at postsynaptic dense bodies and converts to a leak channel no longer sensitive to stimulation by arachidonic acid, acidic pH or mechanical stress, nor inhibited by Gq-coupled receptors but still under the negative control of Gs-coupled receptors. Permeable to other monovalent cations such as Rb(+) and Cs(+). Does not display channel activity but reduces the channel activity of isoform 1 and isoform 2 and reduces cell surface expression of isoform 2. This Homo sapiens (Human) protein is Potassium channel subfamily K member 2.